A 215-amino-acid polypeptide reads, in one-letter code: Thiamine-phosphate synthase (215 aa).

4-amino-2-methyl-5-(diphosphooxymethyl)pyrimidine is bound by residues 40–44 (QLRIK) and Asn-72. Mg(2+) is bound by residues Asp-73 and Asp-92. Ser-111 contributes to the 4-amino-2-methyl-5-(diphosphooxymethyl)pyrimidine binding site. 137–139 (TTT) contacts 2-[(2R,5Z)-2-carboxy-4-methylthiazol-5(2H)-ylidene]ethyl phosphate. Lys-140 lines the 4-amino-2-methyl-5-(diphosphooxymethyl)pyrimidine pocket. 2-[(2R,5Z)-2-carboxy-4-methylthiazol-5(2H)-ylidene]ethyl phosphate is bound by residues Gly-169 and 189-190 (VS).

Belongs to the thiamine-phosphate synthase family. It depends on Mg(2+) as a cofactor.

The enzyme catalyses 2-[(2R,5Z)-2-carboxy-4-methylthiazol-5(2H)-ylidene]ethyl phosphate + 4-amino-2-methyl-5-(diphosphooxymethyl)pyrimidine + 2 H(+) = thiamine phosphate + CO2 + diphosphate. It catalyses the reaction 2-(2-carboxy-4-methylthiazol-5-yl)ethyl phosphate + 4-amino-2-methyl-5-(diphosphooxymethyl)pyrimidine + 2 H(+) = thiamine phosphate + CO2 + diphosphate. It carries out the reaction 4-methyl-5-(2-phosphooxyethyl)-thiazole + 4-amino-2-methyl-5-(diphosphooxymethyl)pyrimidine + H(+) = thiamine phosphate + diphosphate. Its pathway is cofactor biosynthesis; thiamine diphosphate biosynthesis; thiamine phosphate from 4-amino-2-methyl-5-diphosphomethylpyrimidine and 4-methyl-5-(2-phosphoethyl)-thiazole: step 1/1. In terms of biological role, condenses 4-methyl-5-(beta-hydroxyethyl)thiazole monophosphate (THZ-P) and 2-methyl-4-amino-5-hydroxymethyl pyrimidine pyrophosphate (HMP-PP) to form thiamine monophosphate (TMP). The protein is Thiamine-phosphate synthase of Proteus mirabilis (strain HI4320).